Reading from the N-terminus, the 358-residue chain is MTLPSPPMSLLAELTHRCPLSCPYCSNPLELERKAAELDTATWTAVLEQAAELGVLQVHFSGGEPMARPDLVELVSVARRLNLYSNLITSGVLLDEPKLEALDRAGLDHIQLSFQDVTEAGAERIGGLKGAQARKVAAARLIRASGIPMTLNFVVHRENVARIPEMFALARELGAGRVEIAHTQYYGWGLKNREALLPSRDQLEESTRAVEAERAKGGLSVDYVTPDYHADRPKPCMGGWGQRFVNVTPSGRVLPCHAAEIIPDVAFPNVQDVTLSEIWNISPLFNMFRGTDWMPEPCRSCERKERDWGGCRCQAMALTGNAANTDPVCSLSPYHDRVEQAVENNMQPESTLFYRRYT.

Positions 4-219 (PSPPMSLLAE…VEAERAKGGL (216 aa)) constitute a Radical SAM core domain. Residues C18, C22, and C25 each coordinate [4Fe-4S] cluster.

The protein belongs to the radical SAM superfamily. PqqE family. In terms of assembly, interacts with PqqD. The interaction is necessary for activity of PqqE. The cofactor is [4Fe-4S] cluster.

It carries out the reaction [PQQ precursor protein] + S-adenosyl-L-methionine = E-Y cross-linked-[PQQ precursor protein] + 5'-deoxyadenosine + L-methionine + H(+). The protein operates within cofactor biosynthesis; pyrroloquinoline quinone biosynthesis. In terms of biological role, catalyzes the cross-linking of a glutamate residue and a tyrosine residue in the PqqA protein as part of the biosynthesis of pyrroloquinoline quinone (PQQ). In Gluconobacter oxydans (strain 621H) (Gluconobacter suboxydans), this protein is PqqA peptide cyclase.